The sequence spans 719 residues: MQSLDRVDLCESLLTWIQTFHVDAPCKTVEDLTSGVAMAMVLQKIDPVYFDENWLNRIKTDVGDNWRLKISNLKKILKGILDYNHEILGHQVNDFTLPDVILIGEHSDASELGRMLQLILGCAVKCEQKQEYIQAIMMMEESVQHVVMTAIQELMSKETPVSIGTDAYAELDRQLKKANEELNDALSAKEEIAQRCHELDMQVAGLQEEKSSLLAENQILMERMNQSDSLEDPNSPAGRRHLQLQTQLEQLQEETFRLEASKDDYRIRCEELEKEITEFRQQNEDLITLADEAQSLKDEMDVLRHSSDKVAKLESQVDSYKKKLEDLGDLRRQVKLLEEKNTMYMQNTVSLEEELRKANAARSQLETYKRQVVELQNRLSEESKKADKLEFEYKRLKEKIDSLQKEKDRLRSERDSLKETIEELRCVQAQEGQLTSAGLMPLGNQEPTDSLAAEIVTPEIKEKLIRLQHENKMLKINQEGSDNEKISLLQSLLDDANMRKNELETENRLVNQRLIEMQSQVEELQKSLQEQGAKTEDSLLLKKKLEEHLEKLHEANNELQKKRAIIEDLEPRYNNSSMKIEELQDALRKKEEDMKQMEERYKKYLEKAKSVIRTLDPKQNQGTGPEIQALKNQLQERDKMFVSLEKEFEKTKTQRDQEEKLIVSAWYNMGMTLHKKAAEDRLASTGSGQSFLARQRQATSSRRSYPGHVQPATASDVIA.

A Calponin-homology (CH) domain is found at 7 to 123 (VDLCESLLTW…RMLQLILGCA (117 aa)). Coiled coils occupy residues 162 to 431 (SIGT…QAQE) and 459 to 665 (EIKE…IVSA). The tract at residues 679–719 (EDRLASTGSGQSFLARQRQATSSRRSYPGHVQPATASDVIA) is disordered. The segment covering 693-704 (ARQRQATSSRRS) has biased composition (low complexity).

This sequence belongs to the hook family. Interacts with microtubules.

It is found in the cytoplasm. It localises to the cytoskeleton. Its subcellular location is the golgi apparatus. In terms of biological role, acts as an adapter protein linking the dynein motor complex to various cargos and converts dynein from a non-processive to a highly processive motor in the presence of dynactin. Facilitates the interaction between dynein and dynactin and activates dynein processivity (the ability to move along a microtubule for a long distance without falling off the track). Predominantly recruits 2 dyneins, which increases both the force and speed of the microtubule motor. Component of the FTS/Hook/FHIP complex (FHF complex). The FHF complex may function to promote vesicle trafficking and/or fusion via the homotypic vesicular protein sorting complex (the HOPS complex). May regulate clearance of endocytosed receptors such as MSR1. Participates in defining the architecture and localization of the Golgi complex. FHF complex promotes the distribution of AP-4 complex to the perinuclear area of the cell. The sequence is that of Protein Hook homolog 3 (hook3) from Xenopus laevis (African clawed frog).